The following is a 317-amino-acid chain: 3',5'-bisphosphate nucleotidase (317 aa).

The active-site Proton acceptor is Asp46. Mg(2+)-binding residues include Glu69, Asp118, Ile120, and Asp121. Catalysis depends on Thr123, which acts as the Proton acceptor. Thr123 contacts adenosine 3',5'-bisphosphate. AMP contacts are provided by Ser198, His203, Ser227, Lys230, Arg244, Tyr251, and Asp257. Positions 203, 227, 230, and 244 each coordinate adenosine 3',5'-bisphosphate. Asp257 contributes to the Mg(2+) binding site. Asp257 is an adenosine 3',5'-bisphosphate binding site.

It belongs to the inositol monophosphatase superfamily. In terms of assembly, monomer. It depends on Mg(2+) as a cofactor.

It localises to the cytoplasm. The enzyme catalyses adenosine 3',5'-bisphosphate + H2O = AMP + phosphate. The catalysed reaction is 1D-myo-inositol 1,4-bisphosphate + H2O = 1D-myo-inositol 4-phosphate + phosphate. Its activity is regulated as follows. Inhibited by Li(2+). In terms of biological role, phosphatase that converts 3'-phosphoadenosine 5'-phosphate (PAP) to AMP. Is also able to hydrolyze inositol 1,4-bisphosphate but with less efficiency. In Entamoeba histolytica (strain ATCC 30459 / HM-1:IMSS / ABRM), this protein is 3',5'-bisphosphate nucleotidase.